The following is a 164-amino-acid chain: Outer membrane protein assembly factor BamE (164 aa).

The signal sequence occupies residues 1–19; it reads MHAFFPRLLLLLLFLPLTH. Positions 111-164 are disordered; it reads PAFSESEPAQNFFSPEQTFTPAPDTDSNMNEEPDKKGTVNFLKENQTNFYKDNQ. 2 stretches are compositionally biased toward polar residues: residues 117 to 140 and 153 to 164; these read EPAQNFFSPEQTFTPAPDTDSNMN and KENQTNFYKDNQ.

The protein belongs to the BamE family. Part of the Bam complex.

It is found in the cell outer membrane. Its function is as follows. Part of the outer membrane protein assembly complex, which is involved in assembly and insertion of beta-barrel proteins into the outer membrane. This chain is Outer membrane protein assembly factor BamE, found in Nitrosomonas europaea (strain ATCC 19718 / CIP 103999 / KCTC 2705 / NBRC 14298).